Reading from the N-terminus, the 504-residue chain is Arabinose import ATP-binding protein AraG (504 aa).

2 consecutive ABC transporter domains span residues 8-243 and 256-499; these read LSFR…MVGR and YGEE…MPKV. 40 to 47 serves as a coordination point for ATP; the sequence is GENGAGKS.

It belongs to the ABC transporter superfamily. Arabinose importer (TC 3.A.1.2.2) family. The complex is composed of two ATP-binding proteins (AraG), two transmembrane proteins (AraH) and a solute-binding protein (AraF).

It localises to the cell inner membrane. The catalysed reaction is L-arabinose(out) + ATP + H2O = L-arabinose(in) + ADP + phosphate + H(+). Part of the ABC transporter complex AraFGH involved in arabinose import. Responsible for energy coupling to the transport system. The chain is Arabinose import ATP-binding protein AraG from Shigella sonnei (strain Ss046).